Reading from the N-terminus, the 622-residue chain is 1-deoxy-D-xylulose-5-phosphate synthase (622 aa).

Thiamine diphosphate contacts are provided by residues histidine 80 and 121 to 123 (GHS). Aspartate 152 lines the Mg(2+) pocket. Thiamine diphosphate contacts are provided by residues 153–154 (GA), asparagine 181, tyrosine 288, and glutamate 370. Asparagine 181 is a binding site for Mg(2+).

It belongs to the transketolase family. DXPS subfamily. As to quaternary structure, homodimer. Mg(2+) is required as a cofactor. Thiamine diphosphate serves as cofactor.

It carries out the reaction D-glyceraldehyde 3-phosphate + pyruvate + H(+) = 1-deoxy-D-xylulose 5-phosphate + CO2. It functions in the pathway metabolic intermediate biosynthesis; 1-deoxy-D-xylulose 5-phosphate biosynthesis; 1-deoxy-D-xylulose 5-phosphate from D-glyceraldehyde 3-phosphate and pyruvate: step 1/1. Catalyzes the acyloin condensation reaction between C atoms 2 and 3 of pyruvate and glyceraldehyde 3-phosphate to yield 1-deoxy-D-xylulose-5-phosphate (DXP). This is 1-deoxy-D-xylulose-5-phosphate synthase from Shewanella sp. (strain MR-4).